Reading from the N-terminus, the 463-residue chain is MQHAHVIGLGKSGCAAALLLRQQGWQVELSDRNAVAAPPELVSQGVQFRLGESLDPVAWGWQTPEQRPNCIVVSPGVPWDLPGLRQAAEELQIETLGELELAWRTLSDIPWVAVTGTNGKTTTTALIAAIFERAGLQAPACGNIGFAACEVARQQQQGEAKPLDWVIAEASSYQIEAAATLAATIGLWTTFTPDHLNRHYTLENYFTIKASLLDRAQQQVLNGDDPYLRNQANATSRWPLAFWTSTQGAEALPTSRDRGFWIEEGWVIDRGDRLFPVERFSMVGNHNQQNLLMAVAAARLAGIEAEAIAEAMANFPGIAHRLERVATWQGIELINDSKATNYDAAWVGLQAVPGPTILIAGGEAKQGDDQAWLDLIQAKARAVLLIGSAAPLFARRLAEVGYSSPVENAETLDRAVPRAVELAQSLDASHVLLSPACASFDQYPNFEARGDHFRRCAQAIAKG.

Position 116–122 (116–122) interacts with ATP; the sequence is GTNGKTT.

It belongs to the MurCDEF family.

The protein resides in the cytoplasm. The catalysed reaction is UDP-N-acetyl-alpha-D-muramoyl-L-alanine + D-glutamate + ATP = UDP-N-acetyl-alpha-D-muramoyl-L-alanyl-D-glutamate + ADP + phosphate + H(+). It participates in cell wall biogenesis; peptidoglycan biosynthesis. Its function is as follows. Cell wall formation. Catalyzes the addition of glutamate to the nucleotide precursor UDP-N-acetylmuramoyl-L-alanine (UMA). The sequence is that of UDP-N-acetylmuramoylalanine--D-glutamate ligase from Synechococcus elongatus (strain ATCC 33912 / PCC 7942 / FACHB-805) (Anacystis nidulans R2).